Consider the following 82-residue polypeptide: Large ribosomal subunit protein uL23 (82 aa).

It belongs to the universal ribosomal protein uL23 family. In terms of assembly, part of the 50S ribosomal subunit. Contacts protein L29.

Binds to 23S rRNA. One of the proteins that surrounds the polypeptide exit tunnel on the outside of the ribosome. The protein is Large ribosomal subunit protein uL23 of Methanospirillum hungatei JF-1 (strain ATCC 27890 / DSM 864 / NBRC 100397 / JF-1).